A 526-amino-acid polypeptide reads, in one-letter code: Dual specificity tyrosine-phosphorylation-regulated kinase 2 (526 aa).

2 stretches are compositionally biased toward polar residues: residues 30-40 (TTQPNGLTTLG) and 60-70 (GSSSSLKSTDG). The tract at residues 30–76 (TTQPNGLTTLGKSGLPVVQDRQSESAHRRQGSSSSLKSTDGTGKVKA) is disordered. Thr31 carries the phosphothreonine; by ATM modification. Positions 114–116 (KKR) match the Nuclear localization signal motif. The 314-residue stretch at 147–460 (YEVLKVIGKG…PSQALRHPWL (314 aa)) folds into the Protein kinase domain. Residues 153 to 161 (IGKGSFGQV), Lys176, and 226 to 229 (FELL) contribute to the ATP site. The active-site Proton acceptor is Asp273. Position 307 is a phosphotyrosine (Tyr307). Ser367 is subject to Phosphoserine; by ATM. The disordered stretch occupies residues 462–499 (RRLPKPPTGEKASAKRITESTGAITSISKLPPTSSSAS). Residues 480 to 499 (ESTGAITSISKLPPTSSSAS) show a composition bias toward polar residues.

This sequence belongs to the protein kinase superfamily. CMGC Ser/Thr protein kinase family. MNB/DYRK subfamily. In terms of assembly, interacts with MDM2. Requires Mg(2+) as cofactor. Mn(2+) is required as a cofactor. In terms of processing, phosphorylated on serine/threonine residues. Phosphorylation on Thr-31 and Ser-367 by ATM in response to genotoxic stress disrupts MDM2 binding and prevents MDM2-mediated ubiquitination and subsequent proteasome degradation, thus promoting p53/TP53-mediated apoptosis. Ubiquitination in nucleus by MDM2 in normal conditions leads to proteasome degradation.

Its subcellular location is the cytoplasm. It is found in the nucleus. The catalysed reaction is L-seryl-[protein] + ATP = O-phospho-L-seryl-[protein] + ADP + H(+). The enzyme catalyses L-threonyl-[protein] + ATP = O-phospho-L-threonyl-[protein] + ADP + H(+). It catalyses the reaction L-tyrosyl-[protein] + ATP = O-phospho-L-tyrosyl-[protein] + ADP + H(+). Autophosphorylates on tyrosine residues. Its function is as follows. Serine/threonine-protein kinase involved in the control of mitotic transition and the regulation of cellular growth and/or development. The protein is Dual specificity tyrosine-phosphorylation-regulated kinase 2 of Gallus gallus (Chicken).